The primary structure comprises 351 residues: Ceramide hydroxylase (351 aa).

Helical transmembrane passes span 26-46 (AAIY…GFLI), 47-67 (AATT…MLAL), 141-161 (GFLF…AILI), and 204-224 (VACW…VVPV).

It belongs to the fatty acid desaturase type 1 family.

The protein resides in the cell inner membrane. It participates in lipid metabolism; sphingolipid metabolism. Its function is as follows. Involved in de novo bacterial ceramide synthesis. This is Ceramide hydroxylase from Caulobacter vibrioides (strain NA1000 / CB15N) (Caulobacter crescentus).